A 149-amino-acid chain; its full sequence is Large ribosomal subunit protein bL9 (149 aa).

The protein belongs to the bacterial ribosomal protein bL9 family.

In terms of biological role, binds to the 23S rRNA. In Geobacillus kaustophilus (strain HTA426), this protein is Large ribosomal subunit protein bL9.